The sequence spans 277 residues: Myelin proteolipid protein (277 aa).

The Cytoplasmic segment spans residues 2–10 (GLLECCARC). S-palmitoyl cysteine attachment occurs at residues C6, C7, and C10. A helical membrane pass occupies residues 11-36 (LIGAPFASLVATGLCFFGVALFCGCG). Topologically, residues 37-59 (HEALTGTEQLIETYFSKNYQDYE) are extracellular. Residues 60 to 88 (FLIDVIHGFQYFIYGTAAFFFLYGALLLA) form a helical membrane-spanning segment. At 89–151 (EGFYTTGAVR…LGKWLGHPDK (63 aa)) the chain is on the cytoplasmic side. Residues C109, C139, and C141 are each lipidated (S-palmitoyl cysteine). Residues 152–178 (FVGITYVLTIIWLLVFACSAVPVYIYF) form a helical membrane-spanning segment. Residues 179–238 (NTWTTCQSIGNPTKTSASIGTLCADARMYGILPWNAFPGKVCGSNLLSICKTSEFQMTFH) lie on the Extracellular side of the membrane. 2 cysteine pairs are disulfide-bonded: C184-C228 and C201-C220. T199 is lipidated: O-palmitoyl threonine. The chain crosses the membrane as a helical span at residues 239–268 (LFIAAFVGAAATLVSLVTFIIATTYNFAVL). The Cytoplasmic segment spans residues 269 to 277 (RLMGRGTKF).

It belongs to the myelin proteolipid protein family.

The protein localises to the cell membrane. This is the major myelin protein from the central nervous system. It plays an important role in the formation or maintenance of the multilamellar structure of myelin. This is Myelin proteolipid protein (PLP1) from Taeniopygia guttata (Zebra finch).